The primary structure comprises 229 residues: MEKLTTLTGVAVPLRRSNVDTDQIIPAVFLKRVKKSGFDDALFYAWRRDPEFVLNKPEYKQGKILVAGPDFGIGSSREHAVWALHDYGFRVVISSRFADIFYGNTAKNGVLAAIMPQESIELLWKLLDEEPGREMTVSLEDRTVTCGDVTLPFEVNDYTRWRLMNGYDDIDLTLQHEDDIIAYEKMRAEKFPFKPKTLPVKREPEQPIESAREGEYPDWQGPLADRGII.

The disordered stretch occupies residues leucine 198–isoleucine 229. Over residues valine 200 to glutamate 215 the composition is skewed to basic and acidic residues.

Belongs to the LeuD family. LeuD type 1 subfamily. Heterodimer of LeuC and LeuD.

It catalyses the reaction (2R,3S)-3-isopropylmalate = (2S)-2-isopropylmalate. Its pathway is amino-acid biosynthesis; L-leucine biosynthesis; L-leucine from 3-methyl-2-oxobutanoate: step 2/4. Functionally, catalyzes the isomerization between 2-isopropylmalate and 3-isopropylmalate, via the formation of 2-isopropylmaleate. In Bifidobacterium adolescentis (strain ATCC 15703 / DSM 20083 / NCTC 11814 / E194a), this protein is 3-isopropylmalate dehydratase small subunit.